A 311-amino-acid polypeptide reads, in one-letter code: tRNA-cytidine(32) 2-sulfurtransferase (311 aa).

Positions 47–52 match the PP-loop motif motif; sequence SGGKDS. The [4Fe-4S] cluster site is built by Cys122, Cys125, and Cys213.

Belongs to the TtcA family. Homodimer. Mg(2+) serves as cofactor. Requires [4Fe-4S] cluster as cofactor.

It is found in the cytoplasm. It carries out the reaction cytidine(32) in tRNA + S-sulfanyl-L-cysteinyl-[cysteine desulfurase] + AH2 + ATP = 2-thiocytidine(32) in tRNA + L-cysteinyl-[cysteine desulfurase] + A + AMP + diphosphate + H(+). Its pathway is tRNA modification. Its function is as follows. Catalyzes the ATP-dependent 2-thiolation of cytidine in position 32 of tRNA, to form 2-thiocytidine (s(2)C32). The sulfur atoms are provided by the cysteine/cysteine desulfurase (IscS) system. This is tRNA-cytidine(32) 2-sulfurtransferase from Pectobacterium atrosepticum (strain SCRI 1043 / ATCC BAA-672) (Erwinia carotovora subsp. atroseptica).